Consider the following 289-residue polypeptide: Bifunctional protein FolD (289 aa).

NADP(+) contacts are provided by residues 166 to 168 (GVS) and Ile232.

This sequence belongs to the tetrahydrofolate dehydrogenase/cyclohydrolase family. As to quaternary structure, homodimer.

The catalysed reaction is (6R)-5,10-methylene-5,6,7,8-tetrahydrofolate + NADP(+) = (6R)-5,10-methenyltetrahydrofolate + NADPH. It carries out the reaction (6R)-5,10-methenyltetrahydrofolate + H2O = (6R)-10-formyltetrahydrofolate + H(+). It functions in the pathway one-carbon metabolism; tetrahydrofolate interconversion. Catalyzes the oxidation of 5,10-methylenetetrahydrofolate to 5,10-methenyltetrahydrofolate and then the hydrolysis of 5,10-methenyltetrahydrofolate to 10-formyltetrahydrofolate. This chain is Bifunctional protein FolD, found in Methylobacillus flagellatus (strain ATCC 51484 / DSM 6875 / VKM B-1610 / KT).